The chain runs to 77 residues: DNA-directed RNA polymerase subunit omega (77 aa).

It belongs to the RNA polymerase subunit omega family. The RNAP catalytic core consists of 2 alpha, 1 beta, 1 beta' and 1 omega subunit. When a sigma factor is associated with the core the holoenzyme is formed, which can initiate transcription.

It catalyses the reaction RNA(n) + a ribonucleoside 5'-triphosphate = RNA(n+1) + diphosphate. Its function is as follows. Promotes RNA polymerase assembly. Latches the N- and C-terminal regions of the beta' subunit thereby facilitating its interaction with the beta and alpha subunits. The protein is DNA-directed RNA polymerase subunit omega of Dichelobacter nodosus (strain VCS1703A).